The chain runs to 49 residues: Large ribosomal subunit protein bL32 (49 aa).

This sequence belongs to the bacterial ribosomal protein bL32 family.

In Nautilia profundicola (strain ATCC BAA-1463 / DSM 18972 / AmH), this protein is Large ribosomal subunit protein bL32.